A 397-amino-acid chain; its full sequence is S-adenosylmethionine synthase (397 aa).

H15 serves as a coordination point for ATP. Residue D17 coordinates Mg(2+). E43 provides a ligand contact to K(+). E56 and Q99 together coordinate L-methionine. The tract at residues 99 to 109 is flexible loop; it reads QSGDIAMGVDE. ATP contacts are provided by residues 175–177, 241–242, D250, 256–257, A273, and K277; these read DGK, RF, and RK. An L-methionine-binding site is contributed by D250. L-methionine is bound at residue K281.

The protein belongs to the AdoMet synthase family. Homotetramer; dimer of dimers. The cofactor is Mg(2+). K(+) is required as a cofactor.

It is found in the cytoplasm. It carries out the reaction L-methionine + ATP + H2O = S-adenosyl-L-methionine + phosphate + diphosphate. Its pathway is amino-acid biosynthesis; S-adenosyl-L-methionine biosynthesis; S-adenosyl-L-methionine from L-methionine: step 1/1. In terms of biological role, catalyzes the formation of S-adenosylmethionine (AdoMet) from methionine and ATP. The overall synthetic reaction is composed of two sequential steps, AdoMet formation and the subsequent tripolyphosphate hydrolysis which occurs prior to release of AdoMet from the enzyme. This chain is S-adenosylmethionine synthase, found in Clostridioides difficile (strain 630) (Peptoclostridium difficile).